The sequence spans 1029 residues: U2 snRNP-associated SURP motif-containing protein (1029 aa).

Disordered stretches follow at residues 1–111 and 141–274; these read MADK…EDEK and VNAA…PSTT. Alanine 2 bears the N-acetylalanine mark. The segment covering 7 to 16 has biased composition (polar residues); sequence GGSQKASSKT. The span at 45-54 shows a compositional bias: basic residues; sequence TRPKSPRKHN. A compositionally biased stretch (basic and acidic residues) spans 55 to 64; that stretch reads YRNESARESL. Phosphoserine is present on serine 67. A Glycyl lysine isopeptide (Lys-Gly) (interchain with G-Cter in SUMO2) cross-link involves residue lysine 80. Residues 92 to 121 are a coiled coil; it reads AKRTLSKKEQEELKKKEDEKAAAEIYEEFL. Composition is skewed to basic and acidic residues over residues 97–111 and 144–155; these read SKKE…EDEK and AKEEHETDEKRG. Glycyl lysine isopeptide (Lys-Gly) (interchain with G-Cter in SUMO2) cross-links involve residues lysine 145 and lysine 168. Positions 169 to 178 are enriched in polar residues; sequence NPPNQSSNER. The span at 186 to 222 shows a compositional bias: basic and acidic residues; it reads ETKKPPLKKGEKEKKKSNLELFKEELKQIQEERDERH. Positions 192-232 form a coiled coil; sequence LKKGEKEKKKSNLELFKEELKQIQEERDERHKTKGRLSRFE. A Phosphoserine modification is found at serine 202. Lysine 208 participates in a covalent cross-link: Glycyl lysine isopeptide (Lys-Gly) (interchain with G-Cter in SUMO2). Phosphoserine is present on serine 236. Residues 239-249 show a composition bias toward basic and acidic residues; that stretch reads DGQRRSMDAPS. One can recognise an RRM domain in the interval 274 to 355; that stretch reads TNLYLGNINP…FEMKLGWGKA (82 aa). The SURP motif repeat unit spans residues 430–473; the sequence is LIHRMIEFVVREGPMFEAMIMNREINNPMFRFLFENQTPAHVYY. The residue at position 485 (serine 485) is a Phosphoserine. One can recognise a CID domain in the interval 534-679; that stretch reads LKEEQRDKLE…KLQNIFLGLV (146 aa). The residue at position 719 (threonine 719) is a Phosphothreonine. Glycyl lysine isopeptide (Lys-Gly) (interchain with G-Cter in SUMO2) cross-links involve residues lysine 748 and lysine 749. An N6-acetyllysine; alternate modification is found at lysine 760. Lysine 760 participates in a covalent cross-link: Glycyl lysine isopeptide (Lys-Gly) (interchain with G-Cter in SUMO2); alternate. 2 disordered regions span residues 778 to 841 and 855 to 1029; these read KWEL…EEKR and QDEL…KNKH. Residues 786-806 are compositionally biased toward acidic residues; it reads EESEEEENQNQEEESEDEEDT. Residues serine 788, serine 800, and serine 811 each carry the phosphoserine modification. Composition is skewed to basic and acidic residues over residues 810–841 and 874–922; these read KSEE…EEKR and QVEH…TPTR. Residues lysine 822, lysine 829, and lysine 832 each participate in a glycyl lysine isopeptide (Lys-Gly) (interchain with G-Cter in SUMO2) cross-link. Residues 837–915 adopt a coiled-coil conformation; the sequence is SEEKRAKLRE…ESRSKDKKEK (79 aa). The residue at position 931 (threonine 931) is a Phosphothreonine. Residues serine 946 and serine 948 each carry the phosphoserine modification. Basic and acidic residues predominate over residues 950-980; sequence KSERSERSERSHKESSRSRSSHKDSPRDVSK. A compositionally biased stretch (basic residues) spans 991–1029; that stretch reads TPKRSRRSRSRSPKKSGKKSRSQSRSPHRSHKKSKKNKH.

The protein belongs to the splicing factor SR family. In terms of assembly, interacts with ERBB4.

It is found in the nucleus. In Homo sapiens (Human), this protein is U2 snRNP-associated SURP motif-containing protein (U2SURP).